A 181-amino-acid chain; its full sequence is Adenine phosphoribosyltransferase (181 aa).

This sequence belongs to the purine/pyrimidine phosphoribosyltransferase family. Homodimer.

The protein resides in the cytoplasm. It catalyses the reaction AMP + diphosphate = 5-phospho-alpha-D-ribose 1-diphosphate + adenine. It participates in purine metabolism; AMP biosynthesis via salvage pathway; AMP from adenine: step 1/1. Its function is as follows. Catalyzes a salvage reaction resulting in the formation of AMP, that is energically less costly than de novo synthesis. The sequence is that of Adenine phosphoribosyltransferase from Cytophaga hutchinsonii (strain ATCC 33406 / DSM 1761 / CIP 103989 / NBRC 15051 / NCIMB 9469 / D465).